The sequence spans 203 residues: METLSQDSLLECQICFNYYSPRRRPKLLDCKHTCCSVCLQQMRTSQKDVRCPWCRGITKLPPGFSVSQLPDDPEVLAVIAIPHTSEHTPVFIKLPSNGCYMLPLPISKERTLLPGDMGCRLLPGSQQKSLTVVTIPAEQQPLQGGAPPEAVEEEPDRRGVVKSSTWSGVCTVILVACVLVFLLGIVLHNMSCISKRFTVISCG.

The segment at 12-55 adopts an RING-type zinc-finger fold; sequence CQICFNYYSPRRRPKLLDCKHTCCSVCLQQMRTSQKDVRCPWCR. A necessary for interaction with RRAGA region spans residues 106–165; that stretch reads ISKERTLLPGDMGCRLLPGSQQKSLTVVTIPAEQQPLQGGAPPEAVEEEPDRRGVVKSST. Positions 139 to 158 are disordered; sequence QQPLQGGAPPEAVEEEPDRR. A helical membrane pass occupies residues 167-187; that stretch reads SGVCTVILVACVLVFLLGIVL.

This sequence belongs to the RNF152 family. In terms of assembly, interacts with RRAGA (inactive GDP-bound form); stimulated by amino acid starvation. Interacts with SEC16A. Post-translationally, ubiquitinated. Autoubiquitinated in vitro, leading to its degradation by the proteasome.

The protein resides in the lysosome membrane. The catalysed reaction is S-ubiquitinyl-[E2 ubiquitin-conjugating enzyme]-L-cysteine + [acceptor protein]-L-lysine = [E2 ubiquitin-conjugating enzyme]-L-cysteine + N(6)-ubiquitinyl-[acceptor protein]-L-lysine.. It participates in protein modification; protein ubiquitination. Its function is as follows. E3 ubiquitin-protein ligase that acts as a negative regulator of mTORC1 signaling by mediating ubiquitination of RagA/RRAGA and RHEB. Catalyzes 'Lys-63'-linked polyubiquitination of RagA/RRAGA in response to amino acid starvation, thereby regulating mTORC1 signaling. Also mediates monoubiquitination of RHEB, promoting its association with the TSC-TBC complex and subsequent inhibition. Also mediates 'Lys-48'-linked polyubiquitination of target proteins and their subsequent targeting to the proteasome for degradation. Induces apoptosis when overexpressed. The sequence is that of E3 ubiquitin-protein ligase RNF152 from Mus musculus (Mouse).